An 89-amino-acid polypeptide reads, in one-letter code: Small ribosomal subunit protein uS14 (89 aa).

This sequence belongs to the universal ribosomal protein uS14 family. In terms of assembly, part of the 30S ribosomal subunit. Contacts proteins S3 and S10.

Functionally, binds 16S rRNA, required for the assembly of 30S particles and may also be responsible for determining the conformation of the 16S rRNA at the A site. The sequence is that of Small ribosomal subunit protein uS14 from Parabacteroides distasonis (strain ATCC 8503 / DSM 20701 / CIP 104284 / JCM 5825 / NCTC 11152).